The primary structure comprises 935 residues: MSDYKDTLNLPKTSFSMKGNLANKEPMILNKWEKQGIYKKIREHFAGREKFVLHDGPPYANGSIHVGHAVNKILKDIIIKSKTLSGYDAPFTPTWDCHGLPIELQVEKKHGKAGQSISEDDFRKECRKYAKKQVEIQKKDFKRLGVLGDWEQPYLTMNFDYEANMIRTLAKIIENGHLSKGFKPVHWCTDCGSALAEAEVEYADKVSPAIDVKFKIKDKDKLAQAFGLDSLNHDAFAIIWTTTPWTLPANQAIAVNNQLNYSLIKIEDFYIILAENLVEQTLKRYAIENAQIIATTTGNKLTGIIAEHPFYSRHVPILHGDHVTDDSGTGLVHTAPTHGVDDFTLGKEHNLSMEIFVKGNGCYSENTKLFAGEFIFKASDRIIELLGEKKRLMNSDKIKHSYPHCWRHKTPLMFRATPQWFISMEKQGLRDKALQTIKETSWAPSWGQARIEGMVKDRPDWCISRQRTWGVPLPLFIHKETEELHPNTIEILHKVAEKIEKDGIEAWFNADDCEFITETAQYKSVKDTLDVWFDSGSSSMCILDLDKRLSYPADLYLEGSDQHRGWFQTSLLVAMSAKGSQPYKEVFTHGFVVDEHGRKMSKSLGNVTSPQDIYNTLGADILRLWTASTDYKSEMAVSDQILKRTADTYRRLRNTARFLLSNLDGFNPVTDIIEFDKLVKLDQWAIAKTKEFQDKIIEAYDKYQTHTVAQLIHHFCSIEMGSFYLDIIKDRQYTAKTDGHPRKSAQTAIYHIVHALVRWMAPILSFTADEIWDATPKTTDLPIQLCEWYTGLKSFDQDAELDLEYWAKIQEIRSEVNRVLEIKRNEDVIKASLEAEITIYADKYNYKLLEKLGNELRFLLISSKADLKVIEESTSSSIAANILGLLIEITKIEEPKCERCWHRSSTVGDNPQYKDICSRCVENITTEAGESREFA.

A 'HIGH' region motif is present at residues 58–68 (PYANGSIHVGH). L-isoleucyl-5'-AMP is bound at residue Glu-558. The 'KMSKS' region signature appears at 599–603 (KMSKS). Position 602 (Lys-602) interacts with ATP. Zn(2+)-binding residues include Cys-897, Cys-900, Cys-917, and Cys-920.

This sequence belongs to the class-I aminoacyl-tRNA synthetase family. IleS type 1 subfamily. In terms of assembly, monomer. Requires Zn(2+) as cofactor.

It is found in the cytoplasm. It carries out the reaction tRNA(Ile) + L-isoleucine + ATP = L-isoleucyl-tRNA(Ile) + AMP + diphosphate. In terms of biological role, catalyzes the attachment of isoleucine to tRNA(Ile). As IleRS can inadvertently accommodate and process structurally similar amino acids such as valine, to avoid such errors it has two additional distinct tRNA(Ile)-dependent editing activities. One activity is designated as 'pretransfer' editing and involves the hydrolysis of activated Val-AMP. The other activity is designated 'posttransfer' editing and involves deacylation of mischarged Val-tRNA(Ile). The chain is Isoleucine--tRNA ligase from Francisella tularensis subsp. holarctica (strain OSU18).